We begin with the raw amino-acid sequence, 442 residues long: MKEDEPAGPKVEDLIAQAKMVLDFNWTGEYTRPGPRLYPHQWSWDSALIALGYARYAPDRAMRELSHLFDAQWKNGLLPQIVFNPDFAAYFPDASFWHADESPDAPTHLRTSGIVQPPVHATAVLALLRNAAEAPGVRSFCEKAFSRLVSWHDYLYRERDPGGENLVYIRHPWESGMDNSPMWDAILESMFLYPSDIPSYKRADTHFVSSEDRPESAAYDRFAYLVKLFAERNYDEARIREDCPFLVQDVLFNSLLCRAERDLAELARTLGEEPSAFEARARKTAEAINDKLWDGERGTYLGFDLVSGAHIKVLAAPNFVALYGEVPDRKRARAMLARLSSPSFSLTEGTGVPVTSYDRLGFGFSSVRYWRGPVWVNIDWFLMHGLRRYGYEDEADRLREAIVRLCREEGFYEYFDPTTGMGHGSDLFSWTAALLLDVVLEG.

Substrate contacts are provided by residues Tyr38, Trp42–Asp45, Tyr90, Gln116, and Gly176. The Proton donor role is filled by Asp178. Substrate contacts are provided by residues Arg213 and Tyr369–Trp370. The Proton acceptor role is filled by Glu413.

The protein belongs to the glycosyl hydrolase 63 family. As to quaternary structure, homodimer in solution.

The enzyme catalyses (2R)-2-O-(alpha-D-mannosyl)-glycerate + H2O = D-mannose + (R)-glycerate. It carries out the reaction (2R)-2-O-(alpha-D-glucopyranosyl)-glycerate + H2O = (R)-glycerate + D-glucose. With respect to regulation, activity is not stimulated by divalent cations and not affected in the presence of EDTA. Functionally, hydrolase that catalyzes the hydrolysis of mannosylglycerate (MG), a solute produced in response to osmotic stress in thermophiles, into mannose and glycerate. Can also hydrolyze glucosylglycerate (GG) to glucose and glycerate, with similar catalytic efficiency. Is highly specific for MG and GG, and cannot use mannosylglyceramide (MGA), glucosylglycerol, mannosylglucosylglycerate (MGG), glucosylglucosylglycerate (GGG) or trehalose as substrates. The sequence is that of Mannosylglycerate hydrolase from Rubrobacter radiotolerans (Arthrobacter radiotolerans).